Here is a 60-residue protein sequence, read N- to C-terminus: Large ribosomal subunit protein uL30 (60 aa).

This sequence belongs to the universal ribosomal protein uL30 family. In terms of assembly, part of the 50S ribosomal subunit.

In Albidiferax ferrireducens (strain ATCC BAA-621 / DSM 15236 / T118) (Rhodoferax ferrireducens), this protein is Large ribosomal subunit protein uL30.